The primary structure comprises 133 residues: Ribosome-binding factor A (133 aa).

Belongs to the RbfA family. As to quaternary structure, monomer. Binds 30S ribosomal subunits, but not 50S ribosomal subunits or 70S ribosomes.

It is found in the cytoplasm. Its function is as follows. One of several proteins that assist in the late maturation steps of the functional core of the 30S ribosomal subunit. Associates with free 30S ribosomal subunits (but not with 30S subunits that are part of 70S ribosomes or polysomes). Required for efficient processing of 16S rRNA. May interact with the 5'-terminal helix region of 16S rRNA. This Alteromonas mediterranea (strain DSM 17117 / CIP 110805 / LMG 28347 / Deep ecotype) protein is Ribosome-binding factor A.